The chain runs to 413 residues: MAPPSVFAEVPQAQPVLVFKLTADFREDPDPRKVNLGVGAYRTDDCHPWVLPVVKKVEQKIANDNSLNHEYLPILGLAEFRSCASRLALGDDSPALKEKRVGGVQSLGGTGALRIGADFLARWYNGTNNKNTPVYVSSPTWENHNAVFSAAGFKDIRSYRYWDAEKRGLDLQGFLNDLENAPEFSIVVLHACAHNPTGIDPTPEQWKQIASVMKHRFLFPFFDSAYQGFASGNLERDAWAIRYFVSEGFEFFCAQSFSKNFGLYNERVGNLTVVGKEPESILQVLSQMEKIVRITWSNPPAQGARIVASTLSNPELFEEWTGNVKTMADRILSMRSELRARLEALKTPGTWNHITDQIGMFSFTGLNPKQVEYLVNEKHIYLLPSGRINVSGLTTKNLDYVATSIHEAVTKIQ.

L-aspartate contacts are provided by Gly39 and Trp141. Ser149 carries the post-translational modification Phosphoserine. Asn195 contributes to the L-aspartate binding site. N6-(pyridoxal phosphate)lysine is present on Lys259. Residue Arg387 coordinates L-aspartate.

This sequence belongs to the class-I pyridoxal-phosphate-dependent aminotransferase family. As to quaternary structure, homodimer. Requires pyridoxal 5'-phosphate as cofactor.

It localises to the cytoplasm. The enzyme catalyses L-aspartate + 2-oxoglutarate = oxaloacetate + L-glutamate. It carries out the reaction L-cysteine + 2-oxoglutarate = 2-oxo-3-sulfanylpropanoate + L-glutamate. It catalyses the reaction (2S)-2-aminobutanoate + 2-oxoglutarate = 2-oxobutanoate + L-glutamate. The catalysed reaction is 3-sulfino-L-alanine + 2-oxoglutarate = 3-sulfinopyruvate + L-glutamate. Biosynthesis of L-glutamate from L-aspartate or L-cysteine. Important regulator of levels of glutamate, the major excitatory neurotransmitter of the vertebrate central nervous system. Acts as a scavenger of glutamate in brain neuroprotection. The aspartate aminotransferase activity is involved in hepatic glucose synthesis during development and in adipocyte glyceroneogenesis. Using L-cysteine as substrate, regulates levels of mercaptopyruvate, an important source of hydrogen sulfide. Mercaptopyruvate is converted into H(2)S via the action of 3-mercaptopyruvate sulfurtransferase (3MST). Hydrogen sulfide is an important synaptic modulator and neuroprotectant in the brain. In Pan troglodytes (Chimpanzee), this protein is Aspartate aminotransferase, cytoplasmic.